Here is a 345-residue protein sequence, read N- to C-terminus: Dimethyladenosine transferase 1, mitochondrial (345 aa).

Residues 1 to 27 (MAASGKLGTFRLPPLPTIREIIKLFGL) constitute a mitochondrion transit peptide. S-adenosyl-L-methionine-binding positions include 35–38 (QNFL), Asn36, Leu38, Gly63, Glu85, Asp111, and Asn141.

This sequence belongs to the class I-like SAM-binding methyltransferase superfamily. rRNA adenine N(6)-methyltransferase family. KsgA subfamily. Interacts with mitochondrial RNA polymerase POLRMT. Interacts with TFAM.

Its subcellular location is the mitochondrion. In terms of biological role, S-adenosyl-L-methionine-dependent methyltransferase which specifically dimethylates mitochondrial 12S rRNA at the conserved stem loop. Also required for basal transcription of mitochondrial DNA, probably via its interaction with POLRMT and TFAM. Stimulates transcription independently of the methyltransferase activity. This chain is Dimethyladenosine transferase 1, mitochondrial (Tfb1m), found in Rattus norvegicus (Rat).